Consider the following 346-residue polypeptide: Partitioning defective 6 homolog alpha (346 aa).

Residues 1 to 116 (MARPQRTPAR…SNSLQRRKKG (116 aa)) are interaction with PRKCI and PRKCZ. In terms of domain architecture, PB1 spans 15–95 (IVEVKSKFDA…PPLRLLVQKR (81 aa)). The segment at 126-253 (RTRPPLLISL…VTVKPANQRN (128 aa)) is interaction with PARD3 and CDC42. Residues 133–150 (ISLPQDFRQVSSVIDVDL) enclose the Pseudo-CRIB domain. The PDZ domain maps to 157 to 250 (RVRLHKHGSD…NLIVTVKPAN (94 aa)). Disordered regions lie at residues 257-294 (RGASGRLTGPSSVGPGPTDPDSDDDNSDPVIENRHPPC) and 317-346 (GSSLPSLDSREQANSGWGNGMRGDVSGFSL). The residue at position 278 (S278) is a Phosphoserine. Positions 317 to 332 (GSSLPSLDSREQANSG) are enriched in polar residues. At S345 the chain carries Phosphoserine.

Belongs to the PAR6 family. Interacts with PALS1 and CRB3. Interacts with PARD3. Interacts with GTP-bound forms of CDC42, RHOQ/TC10 and RAC1. Interacts with the N-terminal part of PRKCI and PRKCZ. Part of a complex with PARD3, CDC42 or RAC1 and PRKCI or PRKCZ. Part of a complex with LLGL1 and PRKCI. Interacts with MAP2K5. Interacts with TGFBR1; involved in TGF-beta induced epithelial to mesenchymal transition. Interacts with ECT2 ('Thr-359' phosphorylated form) and PRKCI. Interacts with DCTN1 and PCM1. Phosphorylated by the TGF-beta receptor. In terms of processing, ubiquitinated by the SCF(FBXO31) complex, leading to its proteasomal degradation.

The protein localises to the cytoplasm. It is found in the cell membrane. The protein resides in the cell junction. It localises to the tight junction. Its subcellular location is the cytoskeleton. The protein localises to the microtubule organizing center. It is found in the centrosome. The protein resides in the centriolar satellite. In terms of biological role, adapter protein involved in asymmetrical cell division and cell polarization processes. Probably involved in the formation of epithelial tight junctions. Association with PARD3 may prevent the interaction of PARD3 with F11R/JAM1, thereby preventing tight junction assembly. The PARD6-PARD3 complex links GTP-bound Rho small GTPases to atypical protein kinase C proteins. Regulates centrosome organization and function. Essential for the centrosomal recruitment of key proteins that control centrosomal microtubule organization. In Rattus norvegicus (Rat), this protein is Partitioning defective 6 homolog alpha (Pard6a).